A 118-amino-acid chain; its full sequence is Holo-[acyl-carrier-protein] synthase (118 aa).

Aspartate 6 and glutamate 55 together coordinate Mg(2+).

Belongs to the P-Pant transferase superfamily. AcpS family. It depends on Mg(2+) as a cofactor.

It is found in the cytoplasm. It carries out the reaction apo-[ACP] + CoA = holo-[ACP] + adenosine 3',5'-bisphosphate + H(+). Its function is as follows. Transfers the 4'-phosphopantetheine moiety from coenzyme A to a Ser of acyl-carrier-protein. The polypeptide is Holo-[acyl-carrier-protein] synthase (Chlorobium chlorochromatii (strain CaD3)).